We begin with the raw amino-acid sequence, 286 residues long: 4-diphosphocytidyl-2-C-methyl-D-erythritol kinase (286 aa).

Residue Lys8 is part of the active site. Pro92–Thr102 serves as a coordination point for ATP. The active site involves Asp134.

Belongs to the GHMP kinase family. IspE subfamily.

The enzyme catalyses 4-CDP-2-C-methyl-D-erythritol + ATP = 4-CDP-2-C-methyl-D-erythritol 2-phosphate + ADP + H(+). Its pathway is isoprenoid biosynthesis; isopentenyl diphosphate biosynthesis via DXP pathway; isopentenyl diphosphate from 1-deoxy-D-xylulose 5-phosphate: step 3/6. Functionally, catalyzes the phosphorylation of the position 2 hydroxy group of 4-diphosphocytidyl-2C-methyl-D-erythritol. This is 4-diphosphocytidyl-2-C-methyl-D-erythritol kinase from Caldicellulosiruptor bescii (strain ATCC BAA-1888 / DSM 6725 / KCTC 15123 / Z-1320) (Anaerocellum thermophilum).